The chain runs to 98 residues: Large ribosomal subunit protein uL23 (98 aa).

This sequence belongs to the universal ribosomal protein uL23 family. Part of the 50S ribosomal subunit. Contacts protein L29, and trigger factor when it is bound to the ribosome.

Functionally, one of the early assembly proteins it binds 23S rRNA. One of the proteins that surrounds the polypeptide exit tunnel on the outside of the ribosome. Forms the main docking site for trigger factor binding to the ribosome. This chain is Large ribosomal subunit protein uL23, found in Hahella chejuensis (strain KCTC 2396).